A 327-amino-acid chain; its full sequence is MFDAAPIKKVSVVIPVYNEQESLPELIRRTTAACESLGKAWEILLIDDGSSDSSAELMVKASQEADSHIISILLNRNYGQHAAIMAGFSHVSGDLIITLDADLQNPPEEIPRLVAKADEGFDVVGTVRQNRQDSLFRKSASKIINLLIQRTTGKAMGDYGCMLRAYRRPIIDTMLRCHERSTFIPILANIFARRATEIPVHHAEREFGDSKYSFMRLINLMYDLVTCLTTTPLRLLSLLGSVIAIGGFSLSVLLIVLRLALGPQWAAEGVFMLFAVLFTFIGAQFIGMGLLGEYIGRIYNDVRARPRYFVQQVIYPESTSFTEESHQ.

Over 1–235 (MFDAAPIKKV…TCLTTTPLRL (235 aa)) the chain is Cytoplasmic. The helical transmembrane segment at 236–256 (LSLLGSVIAIGGFSLSVLLIV) threads the bilayer. Over 257–269 (LRLALGPQWAAEG) the chain is Periplasmic. The chain crosses the membrane as a helical span at residues 270–290 (VFMLFAVLFTFIGAQFIGMGL). Topologically, residues 291–327 (LGEYIGRIYNDVRARPRYFVQQVIYPESTSFTEESHQ) are cytoplasmic.

This sequence belongs to the glycosyltransferase 2 family.

The protein localises to the cell inner membrane. The enzyme catalyses UDP-4-deoxy-4-formamido-beta-L-arabinose + di-trans,octa-cis-undecaprenyl phosphate = 4-deoxy-4-formamido-alpha-L-arabinopyranosyl di-trans,octa-cis-undecaprenyl phosphate + UDP. Its pathway is glycolipid biosynthesis; 4-amino-4-deoxy-alpha-L-arabinose undecaprenyl phosphate biosynthesis; 4-amino-4-deoxy-alpha-L-arabinose undecaprenyl phosphate from UDP-4-deoxy-4-formamido-beta-L-arabinose and undecaprenyl phosphate: step 1/2. It functions in the pathway bacterial outer membrane biogenesis; lipopolysaccharide biosynthesis. Catalyzes the transfer of 4-deoxy-4-formamido-L-arabinose from UDP to undecaprenyl phosphate. The modified arabinose is attached to lipid A and is required for resistance to polymyxin and cationic antimicrobial peptides. This is Undecaprenyl-phosphate 4-deoxy-4-formamido-L-arabinose transferase from Salmonella paratyphi A (strain ATCC 9150 / SARB42).